Here is a 372-residue protein sequence, read N- to C-terminus: Queuine tRNA-ribosyltransferase (372 aa).

The active-site Proton acceptor is the D92. Residues 92–96 (DSGGF), D146, Q188, and G215 contribute to the substrate site. Residues 246 to 252 (GIGTLRE) are RNA binding. Catalysis depends on D265, which acts as the Nucleophile. Positions 270–274 (TRLGR) are RNA binding; important for wobble base 34 recognition. The Zn(2+) site is built by C303, C305, C308, and H334.

This sequence belongs to the queuine tRNA-ribosyltransferase family. In terms of assembly, homodimer. Within each dimer, one monomer is responsible for RNA recognition and catalysis, while the other monomer binds to the replacement base PreQ1. Requires Zn(2+) as cofactor.

The catalysed reaction is 7-aminomethyl-7-carbaguanine + guanosine(34) in tRNA = 7-aminomethyl-7-carbaguanosine(34) in tRNA + guanine. It functions in the pathway tRNA modification; tRNA-queuosine biosynthesis. Its function is as follows. Catalyzes the base-exchange of a guanine (G) residue with the queuine precursor 7-aminomethyl-7-deazaguanine (PreQ1) at position 34 (anticodon wobble position) in tRNAs with GU(N) anticodons (tRNA-Asp, -Asn, -His and -Tyr). Catalysis occurs through a double-displacement mechanism. The nucleophile active site attacks the C1' of nucleotide 34 to detach the guanine base from the RNA, forming a covalent enzyme-RNA intermediate. The proton acceptor active site deprotonates the incoming PreQ1, allowing a nucleophilic attack on the C1' of the ribose to form the product. After dissociation, two additional enzymatic reactions on the tRNA convert PreQ1 to queuine (Q), resulting in the hypermodified nucleoside queuosine (7-(((4,5-cis-dihydroxy-2-cyclopenten-1-yl)amino)methyl)-7-deazaguanosine). This Synechococcus sp. (strain CC9902) protein is Queuine tRNA-ribosyltransferase.